The following is a 315-amino-acid chain: Ribosomal RNA small subunit methyltransferase H (315 aa).

Residues 42 to 44, Asp59, Phe96, Asp108, and Gln115 contribute to the S-adenosyl-L-methionine site; that span reads GGH.

It belongs to the methyltransferase superfamily. RsmH family.

It localises to the cytoplasm. It catalyses the reaction cytidine(1402) in 16S rRNA + S-adenosyl-L-methionine = N(4)-methylcytidine(1402) in 16S rRNA + S-adenosyl-L-homocysteine + H(+). Specifically methylates the N4 position of cytidine in position 1402 (C1402) of 16S rRNA. The chain is Ribosomal RNA small subunit methyltransferase H from Gemmatimonas aurantiaca (strain DSM 14586 / JCM 11422 / NBRC 100505 / T-27).